Consider the following 243-residue polypeptide: Uroporphyrinogen-III C-methyltransferase (243 aa).

S-adenosyl-L-homocysteine-binding positions include P12, 88–90 (SGD), 118–119 (ST), M166, and A195.

It belongs to the precorrin methyltransferase family.

The enzyme catalyses uroporphyrinogen III + 2 S-adenosyl-L-methionine = precorrin-2 + 2 S-adenosyl-L-homocysteine + H(+). It participates in cofactor biosynthesis; adenosylcobalamin biosynthesis; precorrin-2 from uroporphyrinogen III: step 1/1. It functions in the pathway porphyrin-containing compound metabolism; siroheme biosynthesis; precorrin-2 from uroporphyrinogen III: step 1/1. Catalyzes the two successive C-2 and C-7 methylation reactions involved in the conversion of uroporphyrinogen III to precorrin-2 via the intermediate formation of precorrin-1. It is a step in the biosynthesis of both cobalamin (vitamin B12) and siroheme. In Synechococcus elongatus (strain ATCC 33912 / PCC 7942 / FACHB-805) (Anacystis nidulans R2), this protein is Uroporphyrinogen-III C-methyltransferase.